Here is a 162-residue protein sequence, read N- to C-terminus: tRNA (cytidine(34)-2'-O)-methyltransferase (162 aa).

S-adenosyl-L-methionine is bound by residues Leu83, Gly105, Ile127, and Ser135.

Belongs to the class IV-like SAM-binding methyltransferase superfamily. RNA methyltransferase TrmH family. TrmL subfamily. In terms of assembly, homodimer.

The protein localises to the cytoplasm. It carries out the reaction cytidine(34) in tRNA + S-adenosyl-L-methionine = 2'-O-methylcytidine(34) in tRNA + S-adenosyl-L-homocysteine + H(+). The catalysed reaction is 5-carboxymethylaminomethyluridine(34) in tRNA(Leu) + S-adenosyl-L-methionine = 5-carboxymethylaminomethyl-2'-O-methyluridine(34) in tRNA(Leu) + S-adenosyl-L-homocysteine + H(+). In terms of biological role, methylates the ribose at the nucleotide 34 wobble position in the two leucyl isoacceptors tRNA(Leu)(CmAA) and tRNA(Leu)(cmnm5UmAA). Catalyzes the methyl transfer from S-adenosyl-L-methionine to the 2'-OH of the wobble nucleotide. In Photorhabdus asymbiotica subsp. asymbiotica (strain ATCC 43949 / 3105-77) (Xenorhabdus luminescens (strain 2)), this protein is tRNA (cytidine(34)-2'-O)-methyltransferase.